The sequence spans 541 residues: GTPase Obg (541 aa).

The Obg domain maps to 2-159 (PTFVDRVVLH…LDAVLELKSV (158 aa)). The interval 63–84 (HPHQRAGGGRPGQGSNRHGADG) is disordered. An OBG-type G domain is found at 160–332 (ADVALVGFPS…LALALAELVA (173 aa)). GTP contacts are provided by residues 166–173 (GFPSAGKS), 191–195 (FTTLV), 213–216 (DVPG), 284–287 (NKVD), and 313–315 (STA). Residues S173 and T193 each contribute to the Mg(2+) site. The OCT domain maps to 350-427 (PRAVDEPDFT…IGAVTFDWEP (78 aa)). Residues 497–541 (KRLTRAQRTALSDSADDFDDGAGFSDSAAFGDSGGSGGDADGGRG) form a disordered region. Residues 517-527 (GAGFSDSAAFG) show a composition bias toward low complexity. Residues 528-541 (DSGGSGGDADGGRG) are compositionally biased toward gly residues.

This sequence belongs to the TRAFAC class OBG-HflX-like GTPase superfamily. OBG GTPase family. As to quaternary structure, monomer. Mg(2+) is required as a cofactor.

It is found in the cytoplasm. An essential GTPase which binds GTP, GDP and possibly (p)ppGpp with moderate affinity, with high nucleotide exchange rates and a fairly low GTP hydrolysis rate. Plays a role in control of the cell cycle, stress response, ribosome biogenesis and in those bacteria that undergo differentiation, in morphogenesis control. In Parafrankia sp. (strain EAN1pec), this protein is GTPase Obg.